The chain runs to 365 residues: Poly(rC)-binding protein 2 (365 aa).

KH domains lie at 13-75 and 97-162; these read TLTI…FAMI and PVTL…VKQI. Lys-115 is covalently cross-linked (Glycyl lysine isopeptide (Lys-Gly) (interchain with G-Cter in SUMO2)). Residue Ser-173 is modified to Phosphoserine. A Glycyl lysine isopeptide (Lys-Gly) (interchain with G-Cter in SUMO2) cross-link involves residue Lys-185. A phosphoserine mark is found at Ser-189 and Ser-272. In terms of domain architecture, KH 3 spans 287-351; that stretch reads TTSHELTIPN…ASISLAQYLI (65 aa). Residue Lys-322 forms a Glycyl lysine isopeptide (Lys-Gly) (interchain with G-Cter in SUMO2) linkage. Phosphoserine is present on residues Ser-364 and Ser-365.

Identified in a mRNP complex, at least composed of DHX9, DDX3X, ELAVL1, HNRNPU, IGF2BP1, ILF3, PABPC1, PCBP2, PTBP2, STAU1, STAU2, SYNCRIP and YBX1. Interacts with IFIH1 and RNF135. Interacts with MAVS (via C-terminus) and ITCH (via WW domains). Interacts with CGAS; preventing the formation of liquid-like droplets in which CGAS is activated. Post-translationally, phosphorylated. The non-phosphorylated form(s) exhibited the strongest poly(rC)-binding activity. (Microbial infection) Proteolytically cleaved by picornavirus proteinase 3CD. In terms of tissue distribution, detected in all tissues examined.

Its subcellular location is the nucleus. It localises to the cytoplasm. Functionally, single-stranded nucleic acid binding protein that binds preferentially to oligo dC. Major cellular poly(rC)-binding protein. Also binds poly(rU). Acts as a negative regulator of antiviral signaling. Negatively regulates cellular antiviral responses mediated by MAVS signaling. It acts as an adapter between MAVS and the E3 ubiquitin ligase ITCH, therefore triggering MAVS ubiquitination and degradation. Negativeley regulates the cGAS-STING pathway via interaction with CGAS, preventing the formation of liquid-like droplets in which CGAS is activated. Together with PCBP1, required for erythropoiesis, possibly by regulating mRNA splicing. In terms of biological role, (Microbial infection) In case of infection by poliovirus, binds to the viral internal ribosome entry site (IRES) and stimulates the IRES-mediated translation. Also plays a role in initiation of viral RNA replication in concert with the viral protein 3CD. In Homo sapiens (Human), this protein is Poly(rC)-binding protein 2.